The chain runs to 177 residues: MAEFATIARPYAKALFGLAQEKNQIESWLGGLEKLAAVVQEGKVASLIDRPETNASEKADILIDLVGLKDKELKNFVIVLAGQKRLSILPEVYAQYQDLTLSFNHIKSAVIYSAYPLTDKQVGELAQMLNKRFDSELKISVEIEPELIGGIKVEVGDQVLDLSVQGKLSALYTTMTN.

The protein belongs to the ATPase delta chain family. F-type ATPases have 2 components, F(1) - the catalytic core - and F(0) - the membrane proton channel. F(1) has five subunits: alpha(3), beta(3), gamma(1), delta(1), epsilon(1). F(0) has three main subunits: a(1), b(2) and c(10-14). The alpha and beta chains form an alternating ring which encloses part of the gamma chain. F(1) is attached to F(0) by a central stalk formed by the gamma and epsilon chains, while a peripheral stalk is formed by the delta and b chains.

Its subcellular location is the cell inner membrane. F(1)F(0) ATP synthase produces ATP from ADP in the presence of a proton or sodium gradient. F-type ATPases consist of two structural domains, F(1) containing the extramembraneous catalytic core and F(0) containing the membrane proton channel, linked together by a central stalk and a peripheral stalk. During catalysis, ATP synthesis in the catalytic domain of F(1) is coupled via a rotary mechanism of the central stalk subunits to proton translocation. Functionally, this protein is part of the stalk that links CF(0) to CF(1). It either transmits conformational changes from CF(0) to CF(1) or is implicated in proton conduction. In Neisseria gonorrhoeae (strain ATCC 700825 / FA 1090), this protein is ATP synthase subunit delta.